The following is a 161-amino-acid chain: Cytochrome c-type biogenesis protein CcmE (161 aa).

Topologically, residues 1–8 (MNPRRKKR) are cytoplasmic. Residues 9-29 (LTLAIALIGGVAAIASLLLYA) traverse the membrane as a helical; Signal-anchor for type II membrane protein segment. Topologically, residues 30–161 (LNSNLNLFYT…DYSQQKSAAQ (132 aa)) are periplasmic. 2 residues coordinate heme: His131 and Tyr135. Positions 138–161 (PEVAEAMGQKHEKLDYSQQKSAAQ) are disordered.

It belongs to the CcmE/CycJ family.

It localises to the cell inner membrane. Functionally, heme chaperone required for the biogenesis of c-type cytochromes. Transiently binds heme delivered by CcmC and transfers the heme to apo-cytochromes in a process facilitated by CcmF and CcmH. The chain is Cytochrome c-type biogenesis protein CcmE from Shewanella sp. (strain MR-4).